The chain runs to 365 residues: Peptide chain release factor 2 (365 aa).

Gln-252 carries the post-translational modification N5-methylglutamine.

This sequence belongs to the prokaryotic/mitochondrial release factor family. In terms of processing, methylated by PrmC. Methylation increases the termination efficiency of RF2.

The protein localises to the cytoplasm. Peptide chain release factor 2 directs the termination of translation in response to the peptide chain termination codons UGA and UAA. The polypeptide is Peptide chain release factor 2 (Pseudoalteromonas translucida (strain TAC 125)).